We begin with the raw amino-acid sequence, 222 residues long: Charged multivesicular body protein 3 (222 aa).

The N-myristoyl glycine moiety is linked to residue glycine 2. The interval 2–113 is intramolecular interaction with C-terminus; that stretch reads GLFGKTQEKP…LQKSTEVMKA (112 aa). Positions 22–54 form a coiled coil; that stretch reads KIRKEMRVVDRQIRDIQREEEKVKRSVKDAAKK. Important for autoinhibitory function stretches follow at residues 59-64 and 168-169; these read VCIVLA and IL. The stretch at 141 to 222 forms a coiled coil; that stretch reads EEMLEDTFES…MQSRLATLRS (82 aa). Residues 151 to 220 are intramolecular interaction with N-terminus; sequence MDDQEEMEEE…EAMQSRLATL (70 aa). Residues 151–222 are interaction with VPS4A; it reads MDDQEEMEEE…MQSRLATLRS (72 aa). Lysine 179 is covalently cross-linked (Glycyl lysine isopeptide (Lys-Gly) (interchain with G-Cter in ubiquitin)). The disordered stretch occupies residues 180–222; it reads APSKVTDALPEPEPPGAMAASEDEEEEEEALEAMQSRLATLRS. The residue at position 200 (serine 200) is a Phosphoserine. A compositionally biased stretch (acidic residues) spans 200–210; the sequence is SEDEEEEEEAL. The short motif at 201–211 is the MIT-interacting motif element; sequence EDEEEEEEALE. 2 interaction with STAMBP regions span residues 203-207 and 221-222; these read EEEEE and RS.

Belongs to the SNF7 family. In terms of assembly, probable core component of the endosomal sorting required for transport complex III (ESCRT-III). ESCRT-III components are thought to multimerize to form a flat lattice on the perimeter membrane of the endosome. Several assembly forms of ESCRT-III may exist that interact and act sequentially. Forms a metastable monomer in solution; its core structure (without part of the putative autoinhibitory C-terminal acidic region) oligomerizes into a flat lattice via two different dimerization interfaces. In vitro, heteromerizes with CHMP2A (but not CHMP4) to form helical tubular structures that expose membrane-interacting sites on the outside whereas VPS4B can associate on the inside of the tubule. May interact with IGFBP7; the relevance of such interaction however remains unclear. Interacts with CHMP2A. Interacts with CHMP4A; the interaction requires the release of CHMP4A autoinhibition. Interacts with VPS4A. Interacts with STAMBP; the interaction appears to relieve the autoinhibition of CHMP3. Interacts with VTA1. As to expression, widely expressed. Expressed in heart, brain, placenta, lung, liver, skeletal muscle, kidney and pancreas.

The protein localises to the cytoplasm. Its subcellular location is the cytosol. It localises to the membrane. It is found in the endosome. The protein resides in the late endosome membrane. Probable core component of the endosomal sorting required for transport complex III (ESCRT-III) which is involved in multivesicular bodies (MVBs) formation and sorting of endosomal cargo proteins into MVBs. MVBs contain intraluminal vesicles (ILVs) that are generated by invagination and scission from the limiting membrane of the endosome and mostly are delivered to lysosomes enabling degradation of membrane proteins, such as stimulated growth factor receptors, lysosomal enzymes and lipids. The MVB pathway appears to require the sequential function of ESCRT-O, -I,-II and -III complexes. ESCRT-III proteins mostly dissociate from the invaginating membrane before the ILV is released. The ESCRT machinery also functions in topologically equivalent membrane fission events, such as the terminal stages of cytokinesis and the budding of enveloped viruses (HIV-1 and other lentiviruses). ESCRT-III proteins are believed to mediate the necessary vesicle extrusion and/or membrane fission activities, possibly in conjunction with the AAA ATPase VPS4. Selectively binds to phosphatidylinositol 3,5-bisphosphate PtdIns(3,5)P2 and PtdIns(3,4)P2 in preference to other phosphoinositides tested. Involved in late stages of cytokinesis. Plays a role in endosomal sorting/trafficking of EGF receptor. Isoform 2 prevents stress-mediated cell death and accumulation of reactive oxygen species when expressed in yeast cells. The sequence is that of Charged multivesicular body protein 3 (CHMP3) from Homo sapiens (Human).